Here is a 164-residue protein sequence, read N- to C-terminus: Shikimate kinase (164 aa).

10 to 15 (GVGKTT) is an ATP binding site. Thr-14 is a Mg(2+) binding site. Positions 28, 52, and 75 each coordinate substrate. Residue Arg-116 coordinates ATP. Arg-134 provides a ligand contact to substrate. Arg-151 serves as a coordination point for ATP.

Belongs to the shikimate kinase family. As to quaternary structure, monomer. The cofactor is Mg(2+).

Its subcellular location is the cytoplasm. The catalysed reaction is shikimate + ATP = 3-phosphoshikimate + ADP + H(+). The protein operates within metabolic intermediate biosynthesis; chorismate biosynthesis; chorismate from D-erythrose 4-phosphate and phosphoenolpyruvate: step 5/7. Its function is as follows. Catalyzes the specific phosphorylation of the 3-hydroxyl group of shikimic acid using ATP as a cosubstrate. The sequence is that of Shikimate kinase from Streptococcus equi subsp. zooepidemicus (strain MGCS10565).